Consider the following 287-residue polypeptide: ATP synthase gamma chain (287 aa).

Belongs to the ATPase gamma chain family. F-type ATPases have 2 components, CF(1) - the catalytic core - and CF(0) - the membrane proton channel. CF(1) has five subunits: alpha(3), beta(3), gamma(1), delta(1), epsilon(1). CF(0) has three main subunits: a, b and c.

Its subcellular location is the cell inner membrane. Its function is as follows. Produces ATP from ADP in the presence of a proton gradient across the membrane. The gamma chain is believed to be important in regulating ATPase activity and the flow of protons through the CF(0) complex. In Geotalea uraniireducens (strain Rf4) (Geobacter uraniireducens), this protein is ATP synthase gamma chain.